The primary structure comprises 191 residues: ADP-ribosylation factor (191 aa).

Glycine 2 is lipidated: N-myristoyl glycine. Residues 24–31, 67–71, and 128–131 contribute to the GTP site; these read GLDAAGKT, DVGGQ, and NKQD.

This sequence belongs to the small GTPase superfamily. Arf family.

Its subcellular location is the golgi apparatus. Functionally, GTP-binding protein involved in protein trafficking; may modulate vesicle budding and uncoating within the Golgi apparatus. This chain is ADP-ribosylation factor, found in Giardia intestinalis (Giardia lamblia).